The following is a 115-amino-acid chain: Aspartate 1-decarboxylase (115 aa).

Catalysis depends on Ser-24, which acts as the Schiff-base intermediate with substrate; via pyruvic acid. Residue Ser-24 is modified to Pyruvic acid (Ser). Substrate is bound at residue Thr-56. Residue Tyr-57 is the Proton donor of the active site. 72-74 (GAA) provides a ligand contact to substrate.

Belongs to the PanD family. Heterooctamer of four alpha and four beta subunits. Pyruvate serves as cofactor. In terms of processing, is synthesized initially as an inactive proenzyme, which is activated by self-cleavage at a specific serine bond to produce a beta-subunit with a hydroxyl group at its C-terminus and an alpha-subunit with a pyruvoyl group at its N-terminus.

It is found in the cytoplasm. It carries out the reaction L-aspartate + H(+) = beta-alanine + CO2. The protein operates within cofactor biosynthesis; (R)-pantothenate biosynthesis; beta-alanine from L-aspartate: step 1/1. Functionally, catalyzes the pyruvoyl-dependent decarboxylation of aspartate to produce beta-alanine. In Pseudothermotoga lettingae (strain ATCC BAA-301 / DSM 14385 / NBRC 107922 / TMO) (Thermotoga lettingae), this protein is Aspartate 1-decarboxylase.